Here is a 554-residue protein sequence, read N- to C-terminus: Hydroxylamine reductase (554 aa).

[2Fe-2S] cluster contacts are provided by Cys3, Cys6, Cys18, and Cys25. Residues His252, Glu276, Cys320, Cys408, Cys436, Cys461, Glu495, and Lys497 each coordinate hybrid [4Fe-2O-2S] cluster. At Cys408 the chain carries Cysteine persulfide.

This sequence belongs to the HCP family. It depends on [2Fe-2S] cluster as a cofactor. The cofactor is hybrid [4Fe-2O-2S] cluster.

The protein localises to the cytoplasm. The catalysed reaction is A + NH4(+) + H2O = hydroxylamine + AH2 + H(+). In terms of biological role, catalyzes the reduction of hydroxylamine to form NH(3) and H(2)O. This chain is Hydroxylamine reductase, found in Shewanella baltica (strain OS195).